A 310-amino-acid polypeptide reads, in one-letter code: Transcription initiation factor IIB (310 aa).

The TFIIB-type zinc finger occupies 9 to 41; the sequence is DKQTVCPECGSTELIGDYERAEVVCAHCGLVID. Residues cysteine 14, cysteine 17, cysteine 33, and cysteine 36 each contribute to the Zn(2+) site. 2 consecutive repeat copies span residues 127–210 and 221–302.

It belongs to the TFIIB family.

Its function is as follows. Stabilizes TBP binding to an archaeal box-A promoter. Also responsible for recruiting RNA polymerase II to the pre-initiation complex (DNA-TBP-TFIIB). The sequence is that of Transcription initiation factor IIB from Methanobrevibacter smithii (strain ATCC 35061 / DSM 861 / OCM 144 / PS).